Here is a 320-residue protein sequence, read N- to C-terminus: Olfactory receptor 10J1 (320 aa).

The Extracellular segment spans residues Met-1–Ile-36. 2 N-linked (GlcNAc...) asparagine glycosylation sites follow: Asn-9 and Asn-16. A helical membrane pass occupies residues Thr-37 to Val-57. The Cytoplasmic portion of the chain corresponds to Thr-58–His-65. Residues Leu-66–Leu-86 form a helical membrane-spanning segment. The Extracellular segment spans residues Val-87 to Thr-110. An intrachain disulfide couples Cys-108 to Cys-199. Residues Gln-111–Tyr-131 form a helical membrane-spanning segment. At Asp-132–Arg-150 the chain is on the cytoplasmic side. A helical transmembrane segment spans residues Leu-151–Val-171. The Extracellular portion of the chain corresponds to Thr-172–Ile-207. The chain crosses the membrane as a helical span at residues Leu-208 to Ser-227. The Cytoplasmic portion of the chain corresponds to Tyr-228 to Ala-247. Residues Phe-248–Ala-268 form a helical membrane-spanning segment. Over Tyr-269–Asp-281 the chain is Extracellular. A helical transmembrane segment spans residues Gln-282–Leu-302. At Arg-303 to Ser-320 the chain is on the cytoplasmic side.

Belongs to the G-protein coupled receptor 1 family.

It localises to the cell membrane. Odorant receptor. The sequence is that of Olfactory receptor 10J1 (OR10J1) from Homo sapiens (Human).